The chain runs to 420 residues: Glucose-1-phosphate adenylyltransferase 2 (420 aa).

Alpha-D-glucose 1-phosphate contacts are provided by residues Y109, G175, 190–191, and S208; that span reads EK.

The protein belongs to the bacterial/plant glucose-1-phosphate adenylyltransferase family. In terms of assembly, homotetramer.

It catalyses the reaction alpha-D-glucose 1-phosphate + ATP + H(+) = ADP-alpha-D-glucose + diphosphate. It functions in the pathway glycan biosynthesis; glycogen biosynthesis. Its function is as follows. Involved in the biosynthesis of ADP-glucose, a building block required for the elongation reactions to produce glycogen. Catalyzes the reaction between ATP and alpha-D-glucose 1-phosphate (G1P) to produce pyrophosphate and ADP-Glc. The protein is Glucose-1-phosphate adenylyltransferase 2 of Pseudoalteromonas atlantica (strain T6c / ATCC BAA-1087).